The chain runs to 225 residues: Golgi to ER traffic protein 1 (225 aa).

A topological domain (lumenal) is located at residue Met1. Residues 2-21 (NWVIIAALFFVIINKLLQYT) traverse the membrane as a helical segment. At 22–107 (SRYQEAWINK…SQSKLFNRLK (86 aa)) the chain is on the cytoplasmic side. The stretch at 37 to 104 (DISSLSKEYS…AKDSQSKLFN (68 aa)) forms a coiled coil. A helical membrane pass occupies residues 108–128 (LLTLTLPFMILKLWKGKFIVY). Over 129–172 (DIPTKDTFPVIVNGVLSQGLLYIPLLPINFLRGIDPNKHILVPG) the chain is Lumenal. Residues 173–189 (VSLGIWLMALTKTIDTV) form a helical membrane-spanning segment. At 190-225 (EFIVKQLVFQPVVSKQVKEKTKEKVVELKTTEAELD) the chain is on the cytoplasmic side.

The protein belongs to the WRB/GET1 family. In terms of assembly, component of the Golgi to ER traffic (GET) complex, which is composed of GET1, GET2 and GET3. Within the complex, GET1 and GET2 form a heterotetramer which is stabilized by phosphatidylinositol binding and which binds to the GET3 homodimer.

It localises to the endoplasmic reticulum membrane. It is found in the golgi apparatus membrane. In terms of biological role, required for the post-translational delivery of tail-anchored (TA) proteins to the endoplasmic reticulum. Together with GET2, acts as a membrane receptor for soluble GET3, which recognizes and selectively binds the transmembrane domain of TA proteins in the cytosol. The GET complex cooperates with the HDEL receptor ERD2 to mediate the ATP-dependent retrieval of resident ER proteins that contain a C-terminal H-D-E-L retention signal from the Golgi to the ER. The protein is Golgi to ER traffic protein 1 of Vanderwaltozyma polyspora (strain ATCC 22028 / DSM 70294 / BCRC 21397 / CBS 2163 / NBRC 10782 / NRRL Y-8283 / UCD 57-17) (Kluyveromyces polysporus).